A 320-amino-acid chain; its full sequence is Cytosolic Fe-S cluster assembly factor NUBP1 (320 aa).

Methionine 1 bears the N-acetylmethionine mark. [4Fe-4S] cluster contacts are provided by cysteine 8, cysteine 22, cysteine 25, and cysteine 31. An ATP-binding site is contributed by glycine 62 to serine 69. 2 residues coordinate [4Fe-4S] cluster: cysteine 235 and cysteine 238. Serine 319 is modified (phosphoserine).

The protein belongs to the Mrp/NBP35 ATP-binding proteins family. NUBP1/NBP35 subfamily. Heterotetramer of 2 NUBP1 and 2 NUBP2 chains. Interacts with KIFC1. Interacts with NUBP2. Interacts with the BBS/CCT complex subunit CCT1. [4Fe-4S] cluster is required as a cofactor.

It is found in the cytoplasm. The protein resides in the nucleus. Its subcellular location is the cell projection. It localises to the cytoskeleton. The protein localises to the cilium axoneme. It is found in the cilium basal body. The protein resides in the microtubule organizing center. Its subcellular location is the centrosome. It localises to the centriole. In terms of biological role, component of the cytosolic iron-sulfur (Fe/S) protein assembly (CIA) machinery. Required for maturation of extramitochondrial Fe-S proteins. The NUBP1-NUBP2 heterotetramer forms a Fe-S scaffold complex, mediating the de novo assembly of an Fe-S cluster and its transfer to target apoproteins. Implicated in the regulation of centrosome duplication. Negatively regulates cilium formation and structure. This is Cytosolic Fe-S cluster assembly factor NUBP1 from Homo sapiens (Human).